Consider the following 234-residue polypeptide: Probable chemoreceptor glutamine deamidase CheD (234 aa).

The protein belongs to the CheD family.

It catalyses the reaction L-glutaminyl-[protein] + H2O = L-glutamyl-[protein] + NH4(+). In terms of biological role, probably deamidates glutamine residues to glutamate on methyl-accepting chemotaxis receptors (MCPs), playing an important role in chemotaxis. The protein is Probable chemoreceptor glutamine deamidase CheD of Burkholderia mallei (strain NCTC 10247).